Consider the following 450-residue polypeptide: Nuclear hormone receptor family member nhr-40 (450 aa).

Positions 28–103 (GTLCVVCSDF…MGMDPKAIQH (76 aa)) form a DNA-binding region, nuclear receptor. 2 NR C4-type zinc fingers span residues 31-51 (CVVCSDFASGIHYSVASCNGC) and 67-91 (CQFSGDCVVGKSVRCVCRSCRLKKC). The 278-residue stretch at 173 to 450 (DVKAVIEDLL…LIDQLIIVGL (278 aa)) folds into the NR LBD domain.

The protein belongs to the nuclear hormone receptor family. As to expression, isoform b: Expressed in body wall muscle cells, pharyngeal muscles, rectal gland cells, vulval and uterine muscles and neurons in the head and ventral nerve cord. Isoform c: Expressed in body wall muscle cells, neurons in the head, nerve ring, ventral and dorsal nerve cords and epidermal cells in the tail.

It is found in the nucleus. Its function is as follows. Orphan nuclear receptor. Plays a role in morphogenesis and elongation during embryonic and larval development. Plays a role in muscle formation and motility. This is Nuclear hormone receptor family member nhr-40 from Caenorhabditis elegans.